Here is a 424-residue protein sequence, read N- to C-terminus: Nuclear hormone receptor family member nhr-55 (424 aa).

Low complexity predominate over residues 1–19 (MNSPSSSSSFCSSSSSPSS). A disordered region spans residues 1–20 (MNSPSSSSSFCSSSSSPSSL). A DNA-binding region (nuclear receptor) is located at residues 25-100 (PDTCQVCGQK…VGMTIENFQF (76 aa)). NR C4-type zinc fingers lie at residues 28–55 (CQVC…FRRC) and 64–88 (CRRN…LKKC). Residues 169–424 (EVPLHTPNAL…FSHPEVFIDL (256 aa)) enclose the NR LBD domain.

This sequence belongs to the nuclear hormone receptor family.

It localises to the nucleus. Its function is as follows. Orphan nuclear receptor. This is Nuclear hormone receptor family member nhr-55 (nhr-55) from Caenorhabditis elegans.